Here is a 225-residue protein sequence, read N- to C-terminus: 2-C-methyl-D-erythritol 4-phosphate cytidylyltransferase (225 aa).

The protein belongs to the IspD/TarI cytidylyltransferase family. IspD subfamily.

It catalyses the reaction 2-C-methyl-D-erythritol 4-phosphate + CTP + H(+) = 4-CDP-2-C-methyl-D-erythritol + diphosphate. It participates in isoprenoid biosynthesis; isopentenyl diphosphate biosynthesis via DXP pathway; isopentenyl diphosphate from 1-deoxy-D-xylulose 5-phosphate: step 2/6. Functionally, catalyzes the formation of 4-diphosphocytidyl-2-C-methyl-D-erythritol from CTP and 2-C-methyl-D-erythritol 4-phosphate (MEP). This is 2-C-methyl-D-erythritol 4-phosphate cytidylyltransferase from Cereibacter sphaeroides (strain KD131 / KCTC 12085) (Rhodobacter sphaeroides).